Reading from the N-terminus, the 493-residue chain is GTPase Der (493 aa).

EngA-type G domains follow at residues 3-166 (PVVA…AEAL) and 206-379 (IKLA…KSAT). GTP-binding positions include 9–16 (GRPNVGKS), 56–60 (DTGGI), 118–121 (NKVD), 212–219 (GRPNVGKS), 259–263 (DTAGV), and 324–327 (NKWD). In terms of domain architecture, KH-like spans 380–464 (TRVGTSVLTR…PIRIQFQNSE (85 aa)).

Belongs to the TRAFAC class TrmE-Era-EngA-EngB-Septin-like GTPase superfamily. EngA (Der) GTPase family. Associates with the 50S ribosomal subunit.

Its function is as follows. GTPase that plays an essential role in the late steps of ribosome biogenesis. The chain is GTPase Der from Vibrio atlanticus (strain LGP32) (Vibrio splendidus (strain Mel32)).